The following is a 287-amino-acid chain: Glutamate racemase (287 aa).

The span at 1–15 (MATKPQDANTTSREA) shows a compositional bias: polar residues. A disordered region spans residues 1 to 25 (MATKPQDANTTSREAITSKADSPPR). Substrate-binding positions include 32–33 (DS) and 64–65 (YG). Cysteine 96 functions as the Proton donor/acceptor in the catalytic mechanism. 97–98 (NT) contributes to the substrate binding site. Cysteine 208 acts as the Proton donor/acceptor in catalysis. 209-210 (TH) contacts substrate.

Belongs to the aspartate/glutamate racemases family.

It catalyses the reaction L-glutamate = D-glutamate. The protein operates within cell wall biogenesis; peptidoglycan biosynthesis. Functionally, provides the (R)-glutamate required for cell wall biosynthesis. This chain is Glutamate racemase, found in Yersinia pseudotuberculosis serotype O:3 (strain YPIII).